The sequence spans 298 residues: Inosose dehydratase (298 aa).

The protein belongs to the IolE/MocC family. Glutathione serves as cofactor. It depends on Co(2+) as a cofactor. Mn(2+) is required as a cofactor.

The enzyme catalyses scyllo-inosose = 3D-3,5/4-trihydroxycyclohexane-1,2-dione + H2O. Its function is as follows. Catalyzes the dehydration of inosose (2-keto-myo-inositol, 2KMI or 2,4,6/3,5-pentahydroxycyclohexanone) to 3D-(3,5/4)-trihydroxycyclohexane-1,2-dione (D-2,3-diketo-4-deoxy-epi-inositol). This Glaesserella parasuis serovar 5 (strain SH0165) (Haemophilus parasuis) protein is Inosose dehydratase.